We begin with the raw amino-acid sequence, 309 residues long: Ribosomal RNA small subunit methyltransferase H (309 aa).

S-adenosyl-L-methionine contacts are provided by residues 30–32 (GGH), aspartate 50, phenylalanine 74, aspartate 96, and glutamine 103.

This sequence belongs to the methyltransferase superfamily. RsmH family.

The protein resides in the cytoplasm. It carries out the reaction cytidine(1402) in 16S rRNA + S-adenosyl-L-methionine = N(4)-methylcytidine(1402) in 16S rRNA + S-adenosyl-L-homocysteine + H(+). Functionally, specifically methylates the N4 position of cytidine in position 1402 (C1402) of 16S rRNA. This Wigglesworthia glossinidia brevipalpis protein is Ribosomal RNA small subunit methyltransferase H.